We begin with the raw amino-acid sequence, 312 residues long: DNA-directed RNA polymerase subunit alpha (312 aa).

Positions Met1–Thr229 are alpha N-terminal domain (alpha-NTD). Positions Ile246 to Val312 are alpha C-terminal domain (alpha-CTD).

It belongs to the RNA polymerase alpha chain family. In cyanobacteria the RNAP catalytic core is composed of 2 alpha, 1 beta, 1 beta', 1 gamma and 1 omega subunit. When a sigma factor is associated with the core the holoenzyme is formed, which can initiate transcription.

It catalyses the reaction RNA(n) + a ribonucleoside 5'-triphosphate = RNA(n+1) + diphosphate. DNA-dependent RNA polymerase catalyzes the transcription of DNA into RNA using the four ribonucleoside triphosphates as substrates. In Prochlorococcus marinus subsp. pastoris (strain CCMP1986 / NIES-2087 / MED4), this protein is DNA-directed RNA polymerase subunit alpha.